The chain runs to 345 residues: GMP reductase 1 (345 aa).

NADP(+)-binding positions include 26–27 (SR), Lys-78, 129–131 (DVA), and 180–181 (VG). Gly-181, Gly-183, and Cys-186 together coordinate K(+). Catalysis depends on Cys-186, which acts as the Thioimidate intermediate. The active-site Proton donor/acceptor is Thr-188. Position 189 (Arg-189) interacts with K(+). GMP-binding positions include 219-221 (DGG), 242-243 (GG), 268-270 (GMS), and 286-290 (RASEG). NADP(+)-binding positions include Met-269, 285–286 (YR), and 314–317 (STCT).

It belongs to the IMPDH/GMPR family. GuaC type 1 subfamily. Homotetramer.

It catalyses the reaction IMP + NH4(+) + NADP(+) = GMP + NADPH + 2 H(+). Functionally, catalyzes the irreversible NADPH-dependent deamination of GMP to IMP. It functions in the conversion of nucleobase, nucleoside and nucleotide derivatives of G to A nucleotides, and in maintaining the intracellular balance of A and G nucleotides. In Homo sapiens (Human), this protein is GMP reductase 1 (GMPR).